Consider the following 423-residue polypeptide: Isovaleryl-CoA dehydrogenase, mitochondrial (423 aa).

The transit peptide at 1-29 (MATATRLLGWRVASWRMRPPPAGFVSQRA) directs the protein to the mitochondrion. N6-acetyllysine; alternate occurs at positions 55, 64, and 75. Residues K55, K64, and K75 each carry the N6-succinyllysine; alternate modification. Residues 162-171 (LAMSEPNAGS) and 195-197 (WIT) each bind FAD. S171 is a substrate binding site. 219-220 (SR) contacts substrate. N6-acetyllysine is present on K238. K259 is modified (N6-acetyllysine; alternate). Position 259 is an N6-succinyllysine; alternate (K259). Substrate is bound by residues Y274 and 281-284 (DLER). The active-site Proton acceptor is the E283. R309 provides a ligand contact to FAD. K315 bears the N6-succinyllysine mark. Residues Q320 and 377–381 (QCFGG) contribute to the FAD site. 404-405 (AG) lines the substrate pocket. Residue 406–408 (TSE) participates in FAD binding.

It belongs to the acyl-CoA dehydrogenase family. In terms of assembly, homotetramer. FAD serves as cofactor.

Its subcellular location is the mitochondrion matrix. It catalyses the reaction 3-methylbutanoyl-CoA + oxidized [electron-transfer flavoprotein] + H(+) = 3-methylbut-2-enoyl-CoA + reduced [electron-transfer flavoprotein]. It carries out the reaction pentanoyl-CoA + oxidized [electron-transfer flavoprotein] + H(+) = (2E)-pentenoyl-CoA + reduced [electron-transfer flavoprotein]. The enzyme catalyses hexanoyl-CoA + oxidized [electron-transfer flavoprotein] + H(+) = (2E)-hexenoyl-CoA + reduced [electron-transfer flavoprotein]. The catalysed reaction is butanoyl-CoA + oxidized [electron-transfer flavoprotein] + H(+) = (2E)-butenoyl-CoA + reduced [electron-transfer flavoprotein]. The protein operates within amino-acid degradation; L-leucine degradation; (S)-3-hydroxy-3-methylglutaryl-CoA from 3-isovaleryl-CoA: step 1/3. Functionally, catalyzes the conversion of isovaleryl-CoA/3-methylbutanoyl-CoA to 3-methylbut-2-enoyl-CoA as an intermediate step in the leucine (Leu) catabolic pathway. To a lesser extent, is also able to catalyze the oxidation of other saturated short-chain acyl-CoA thioesters as pentanoyl-CoA, hexenoyl-CoA and butenoyl-CoA. The polypeptide is Isovaleryl-CoA dehydrogenase, mitochondrial (IVD) (Pongo abelii (Sumatran orangutan)).